The primary structure comprises 89 residues: Small ribosomal subunit protein uS17 (89 aa).

It belongs to the universal ribosomal protein uS17 family. As to quaternary structure, part of the 30S ribosomal subunit.

Functionally, one of the primary rRNA binding proteins, it binds specifically to the 5'-end of 16S ribosomal RNA. This chain is Small ribosomal subunit protein uS17, found in Novosphingobium aromaticivorans (strain ATCC 700278 / DSM 12444 / CCUG 56034 / CIP 105152 / NBRC 16084 / F199).